The sequence spans 418 residues: Acyltransferase calJ (418 aa).

Serine 79 acts as the Acyl-ester intermediate in catalysis. Residues arginine 176 and tyrosine 191 each coordinate substrate.

Belongs to the class-A beta-lactamase family.

Its pathway is secondary metabolite biosynthesis. Acyltransferase; part of the gene cluster that mediates the biosynthesis of calbistrin A and related compounds. Calbistrin A is a secondary metabolite with an interesting structure that was recently found to have bioactivity against leukemia cells. It consists of two polyketides linked by an ester bond: a bicyclic decalin containing polyketide and a linear 12 carbon dioic acid structure. The polyketide synthase calA is probably responsible for forming the decalin moiety. Because calA lacks a designated enoylreductase (ER) domain, the required activity is provided by the trans-enoyl reductase calK. Following release from the PKS, calF then probably catalyzes the oxidation and the subsequent Diels Alder cycloisomerization that lead to the formation of the decalin moiety. The decalin polyketide backbone includes two C-methyl groups, at C7 and C11 in backbone, of which the C7 position is probably methylated by the methyltransferase domain of calA. A candidate for adding the methyl group at C11, if not done by CalA, is the cluster methyltransferase calH. Several additional tailoring enzymes within the cluster could be involved in the modification of the decalin polyketide product. Those include the 3 cytochrome P450 monooxygenases CalE, CalG and CalL, of which one might be responsible for the introduction of the extra hydroxyl group attached to the backbone of the decalin moiety, at position C9 in the backbone, that allows for attachment of the linear moiety. One tailoring enzyme activity that is expected to be involved in biosynthesis of calbistrin is an acyltransferase for connecting the two polyketide synthase products, and which could be performed by the cluster acyltransferase calJ. The enzyme responsible for the biosynthesis of the linear moiety, probably a second PKS, has not been identified yet. This Penicillium decumbens protein is Acyltransferase calJ.